A 308-amino-acid chain; its full sequence is Palmitoyltransferase ZDHHC7 (308 aa).

Topologically, residues 1–50 (MQPSGHRLRDIEHHPLLTDNDNYDSASSSSSETDMADRVWFIRDGCGMVC) are cytoplasmic. A helical transmembrane segment spans residues 51–71 (AVMTWLLVVYADFVVTFVMLL). The Lumenal portion of the chain corresponds to 72 to 75 (PSKD). The chain crosses the membrane as a helical span at residues 76–96 (FWYSVVNGVLFNCLAVLALSS). Residues 97-173 (HLRTMLTDPG…NNCVGEKNQR (77 aa)) lie on the Cytoplasmic side of the membrane. A DHHC domain is found at 130–180 (YKCPKCCCIKPERAHHCSICKRCIRKMDHHCPWVNNCVGEKNQRFFVLFTM). The active-site S-palmitoyl cysteine intermediate is the C160. Residues 174 to 194 (FFVLFTMYIALSSVHALILCG) traverse the membrane as a helical segment. Residues 195 to 217 (LQFISCVRGQWTECSDFSPPITV) lie on the Lumenal side of the membrane. The chain crosses the membrane as a helical span at residues 218–238 (ILLVFLCLEGLLFFTFTAVMF). Residues 239-308 (GTQIHSICND…TRKGGPEFSV (70 aa)) are Cytoplasmic-facing.

It belongs to the DHHC palmitoyltransferase family. Homooligomers. Heterooligomers with ZDHHC3. Autopalmitoylated. As to expression, ubiquitously expressed, with highest levels in liver, kidney and brain. Expressed in all brain regions.

Its subcellular location is the golgi apparatus membrane. It catalyses the reaction L-cysteinyl-[protein] + hexadecanoyl-CoA = S-hexadecanoyl-L-cysteinyl-[protein] + CoA. The enzyme catalyses L-cysteinyl-[protein] + tetradecanoyl-CoA = S-tetradecanoyl-L-cysteinyl-[protein] + CoA. It carries out the reaction L-cysteinyl-[protein] + octadecanoyl-CoA = S-octadecanoyl-L-cysteinyl-[protein] + CoA. In terms of biological role, golgi-localized palmitoyltransferase that catalyzes the addition of palmitate onto various protein substrates and therefore functions in several unrelated biological processes. Has no stringent fatty acid selectivity and in addition to palmitate can also transfer onto target proteins myristate from tetradecanoyl-CoA and stearate from octadecanoyl-CoA. Palmitoylates sex steroid hormone receptors, including ESR1, PGR and AR, thereby regulating their targeting to the plasma membrane and their function in rapid intracellular signaling upon binding of sex hormones. Palmitoylates GNAQ, a heterotrimeric G protein, regulating its dynamic localization at the plasma membrane and is thereby involved in GNAQ-dependent G protein-coupled receptor signaling pathways. Also functions in ligand-induced cell death by regulating the FAS signaling pathway through the palmitoylation and stabilization of the receptor at the plasma membrane. In epithelial cells, palmitoylates SCRIB and regulates its localization to the plasma membrane, regulating indirectly cell polarity and differentiation. Also palmitoylates JAM3 and promotes its expression at tight junctions and regulates its function in cell migration. Palmitoylates the glucose transporter GLUT4/SLC2A4 and controls the insulin-dependent translocation of GLUT4 to the plasma membrane. In brain, could also palmitoylate SNAP25 and DLG4/PSD95. Could also palmitoylate DNAJC5 and regulate its localization to the Golgi membrane. Could also palmitoylate NCDN. May play a role in follicle stimulation hormone (FSH) activation of testicular Sertoli cells. Activates pyroptosis by catalyzing palmitoylation of gasdermin-D (GSDMD). This Mus musculus (Mouse) protein is Palmitoyltransferase ZDHHC7.